The primary structure comprises 132 residues: Large ribosomal subunit protein uL14 (132 aa).

The protein belongs to the universal ribosomal protein uL14 family. As to quaternary structure, part of the 50S ribosomal subunit. Forms a cluster with proteins L3 and L24e, part of which may contact the 16S rRNA in 2 intersubunit bridges.

Its function is as follows. Binds to 23S rRNA. Forms part of two intersubunit bridges in the 70S ribosome. The sequence is that of Large ribosomal subunit protein uL14 from Methanocella arvoryzae (strain DSM 22066 / NBRC 105507 / MRE50).